The following is a 465-amino-acid chain: Cysteine--tRNA ligase (465 aa).

Cys-29 provides a ligand contact to Zn(2+). A 'HIGH' region motif is present at residues 31–41 (ITPYDEVHLGH). Zn(2+) contacts are provided by Cys-212, His-237, and Glu-241. The short motif at 269–273 (KMSKS) is the 'KMSKS' region element. Position 272 (Lys-272) interacts with ATP.

Belongs to the class-I aminoacyl-tRNA synthetase family. As to quaternary structure, monomer. Zn(2+) is required as a cofactor.

Its subcellular location is the cytoplasm. The enzyme catalyses tRNA(Cys) + L-cysteine + ATP = L-cysteinyl-tRNA(Cys) + AMP + diphosphate. This chain is Cysteine--tRNA ligase, found in Endomicrobium trichonymphae.